A 337-amino-acid polypeptide reads, in one-letter code: Ketol-acid reductoisomerase (NADP(+)) (337 aa).

In terms of domain architecture, KARI N-terminal Rossmann spans 1–180 (MQVYYDKDAD…GGTKGGVIET (180 aa)). NADP(+) is bound by residues 24–27 (YGSQ), arginine 47, and serine 51. The active site involves histidine 106. Glycine 132 provides a ligand contact to NADP(+). The KARI C-terminal knotted domain maps to 181-326 (TFREETETDL…ARLRAMMPWI (146 aa)). Positions 189, 193, 225, and 229 each coordinate Mg(2+). Serine 250 contributes to the substrate binding site.

It belongs to the ketol-acid reductoisomerase family. It depends on Mg(2+) as a cofactor.

The catalysed reaction is (2R)-2,3-dihydroxy-3-methylbutanoate + NADP(+) = (2S)-2-acetolactate + NADPH + H(+). The enzyme catalyses (2R,3R)-2,3-dihydroxy-3-methylpentanoate + NADP(+) = (S)-2-ethyl-2-hydroxy-3-oxobutanoate + NADPH + H(+). Its pathway is amino-acid biosynthesis; L-isoleucine biosynthesis; L-isoleucine from 2-oxobutanoate: step 2/4. It functions in the pathway amino-acid biosynthesis; L-valine biosynthesis; L-valine from pyruvate: step 2/4. Involved in the biosynthesis of branched-chain amino acids (BCAA). Catalyzes an alkyl-migration followed by a ketol-acid reduction of (S)-2-acetolactate (S2AL) to yield (R)-2,3-dihydroxy-isovalerate. In the isomerase reaction, S2AL is rearranged via a Mg-dependent methyl migration to produce 3-hydroxy-3-methyl-2-ketobutyrate (HMKB). In the reductase reaction, this 2-ketoacid undergoes a metal-dependent reduction by NADPH to yield (R)-2,3-dihydroxy-isovalerate. The sequence is that of Ketol-acid reductoisomerase (NADP(+)) from Neisseria gonorrhoeae (strain ATCC 700825 / FA 1090).